We begin with the raw amino-acid sequence, 243 residues long: 4-hydroxy-tetrahydrodipicolinate reductase (243 aa).

NAD(+) is bound by residues 9–14 (GANGKM), 78–80 (GTS), and 104–107 (APNF). H134 functions as the Proton donor/acceptor in the catalytic mechanism. H135 provides a ligand contact to (S)-2,3,4,5-tetrahydrodipicolinate. Residue K138 is the Proton donor of the active site. 144-145 (GT) is a binding site for (S)-2,3,4,5-tetrahydrodipicolinate.

This sequence belongs to the DapB family.

The protein localises to the cytoplasm. It catalyses the reaction (S)-2,3,4,5-tetrahydrodipicolinate + NAD(+) + H2O = (2S,4S)-4-hydroxy-2,3,4,5-tetrahydrodipicolinate + NADH + H(+). The catalysed reaction is (S)-2,3,4,5-tetrahydrodipicolinate + NADP(+) + H2O = (2S,4S)-4-hydroxy-2,3,4,5-tetrahydrodipicolinate + NADPH + H(+). Its pathway is amino-acid biosynthesis; L-lysine biosynthesis via DAP pathway; (S)-tetrahydrodipicolinate from L-aspartate: step 4/4. Catalyzes the conversion of 4-hydroxy-tetrahydrodipicolinate (HTPA) to tetrahydrodipicolinate. In Legionella pneumophila subsp. pneumophila (strain Philadelphia 1 / ATCC 33152 / DSM 7513), this protein is 4-hydroxy-tetrahydrodipicolinate reductase.